A 397-amino-acid polypeptide reads, in one-letter code: Torsin-3A (397 aa).

The signal sequence occupies residues 1–25 (MLRGPWRQLWLFFLLLLPGAPEPRG). Residue N122 is glycosylated (N-linked (GlcNAc...) asparagine). 167–174 (GWSGTGKN) is an ATP binding site.

The protein belongs to the ClpA/ClpB family. Torsin subfamily. May not form homohexamers. In terms of processing, N-glycosylated. As to expression, ubiquitously expressed. Highest expression in stomach, salivary glands and lymph nodes. Isoform 2 is expressed in placenta.

The protein resides in the cytoplasm. It localises to the endoplasmic reticulum lumen. This is Torsin-3A (TOR3A) from Homo sapiens (Human).